The primary structure comprises 190 residues: Shikimate kinase (190 aa).

ATP is bound at residue 22–27 (GSGKST). Serine 26 is a binding site for Mg(2+). The substrate site is built by aspartate 44, arginine 68, and glycine 90. Arginine 127 lines the ATP pocket. Residue arginine 146 participates in substrate binding.

Belongs to the shikimate kinase family. As to quaternary structure, monomer. Mg(2+) serves as cofactor.

Its subcellular location is the cytoplasm. The catalysed reaction is shikimate + ATP = 3-phosphoshikimate + ADP + H(+). It participates in metabolic intermediate biosynthesis; chorismate biosynthesis; chorismate from D-erythrose 4-phosphate and phosphoenolpyruvate: step 5/7. Functionally, catalyzes the specific phosphorylation of the 3-hydroxyl group of shikimic acid using ATP as a cosubstrate. This Microcystis aeruginosa (strain NIES-843 / IAM M-2473) protein is Shikimate kinase.